A 368-amino-acid chain; its full sequence is Chaperone protein DnaJ (368 aa).

In terms of domain architecture, J spans 5–65 (DYYEVLGLTK…QKKARYDQFG (61 aa)). The segment at 125–207 (GKETEIEIPK…CRGEGKVQKR (83 aa)) adopts a CR-type zinc-finger fold. Residues cysteine 138, cysteine 141, cysteine 155, cysteine 158, cysteine 181, cysteine 184, cysteine 195, and cysteine 198 each contribute to the Zn(2+) site. CXXCXGXG motif repeat units lie at residues 138–145 (CETCHGSG), 155–162 (CSTCNGAG), 181–188 (CTTCHGTG), and 195–202 (CSTCRGEG).

This sequence belongs to the DnaJ family. As to quaternary structure, homodimer. It depends on Zn(2+) as a cofactor.

It localises to the cytoplasm. In terms of biological role, participates actively in the response to hyperosmotic and heat shock by preventing the aggregation of stress-denatured proteins and by disaggregating proteins, also in an autonomous, DnaK-independent fashion. Unfolded proteins bind initially to DnaJ; upon interaction with the DnaJ-bound protein, DnaK hydrolyzes its bound ATP, resulting in the formation of a stable complex. GrpE releases ADP from DnaK; ATP binding to DnaK triggers the release of the substrate protein, thus completing the reaction cycle. Several rounds of ATP-dependent interactions between DnaJ, DnaK and GrpE are required for fully efficient folding. Also involved, together with DnaK and GrpE, in the DNA replication of plasmids through activation of initiation proteins. In Lysinibacillus sphaericus (Bacillus sphaericus), this protein is Chaperone protein DnaJ.